Reading from the N-terminus, the 176-residue chain is Phosphopantetheine adenylyltransferase (176 aa).

Position 11 (threonine 11) interacts with substrate. ATP is bound by residues 11–12 (TF) and histidine 19. The substrate site is built by lysine 43, leucine 93, and arginine 107. ATP is bound by residues glutamate 117 and 141-147 (LSVVSSS).

It belongs to the bacterial CoaD family. Homohexamer. Mg(2+) serves as cofactor.

The protein resides in the cytoplasm. It catalyses the reaction (R)-4'-phosphopantetheine + ATP + H(+) = 3'-dephospho-CoA + diphosphate. It functions in the pathway cofactor biosynthesis; coenzyme A biosynthesis; CoA from (R)-pantothenate: step 4/5. In terms of biological role, reversibly transfers an adenylyl group from ATP to 4'-phosphopantetheine, yielding dephospho-CoA (dPCoA) and pyrophosphate. The chain is Phosphopantetheine adenylyltransferase from Tropheryma whipplei (strain TW08/27) (Whipple's bacillus).